The sequence spans 881 residues: Mechanosensitive ion channel protein 4 (881 aa).

Positions 35–245 are disordered; the sequence is FWHNDKSSKP…EEEDPFSEED (211 aa). Residues 56-66 are compositionally biased toward basic and acidic residues; that stretch reads FMRRSSEKSEE. Composition is skewed to polar residues over residues 73-82, 100-118, and 206-230; these read LINQFLNKQK, QKNT…SASP, and TPRS…NQGG. The segment covering 234–245 has biased composition (acidic residues); sequence LEEEEDPFSEED. 4 helical membrane passes run 255–275, 297–317, 339–359, and 377–397; these read ICVW…SLIC, VMVL…KLFV, KPVQ…FLFD, and VLIC…LVKV. A disordered region spans residues 457-501; sequence GPKAVSSPPQVTVGSGRLQKSPSRVGKSPVLSRSGSKKEGGEEGI. A compositionally biased stretch (polar residues) spans 463 to 478; it reads SPPQVTVGSGRLQKSP. Positions 492-501 are enriched in basic and acidic residues; that stretch reads SKKEGGEEGI. 2 helical membrane passes run 643–663 and 678–698; these read IVDV…LGIA and VVFV…FVFV.

This sequence belongs to the MscS (TC 1.A.23) family.

It localises to the membrane. Mechanosensitive channel that opens in response to stretch forces in the membrane lipid bilayer. The sequence is that of Mechanosensitive ion channel protein 4 (MSL4) from Arabidopsis thaliana (Mouse-ear cress).